A 210-amino-acid polypeptide reads, in one-letter code: ATP phosphoribosyltransferase (210 aa).

Belongs to the ATP phosphoribosyltransferase family. Short subfamily. As to quaternary structure, heteromultimer composed of HisG and HisZ subunits.

It localises to the cytoplasm. The enzyme catalyses 1-(5-phospho-beta-D-ribosyl)-ATP + diphosphate = 5-phospho-alpha-D-ribose 1-diphosphate + ATP. It participates in amino-acid biosynthesis; L-histidine biosynthesis; L-histidine from 5-phospho-alpha-D-ribose 1-diphosphate: step 1/9. Functionally, catalyzes the condensation of ATP and 5-phosphoribose 1-diphosphate to form N'-(5'-phosphoribosyl)-ATP (PR-ATP). Has a crucial role in the pathway because the rate of histidine biosynthesis seems to be controlled primarily by regulation of HisG enzymatic activity. This is ATP phosphoribosyltransferase from Picosynechococcus sp. (strain ATCC 27264 / PCC 7002 / PR-6) (Agmenellum quadruplicatum).